We begin with the raw amino-acid sequence, 94 residues long: Integration host factor subunit beta (94 aa).

This sequence belongs to the bacterial histone-like protein family. In terms of assembly, heterodimer of an alpha and a beta chain.

This protein is one of the two subunits of integration host factor, a specific DNA-binding protein that functions in genetic recombination as well as in transcriptional and translational control. This chain is Integration host factor subunit beta, found in Azoarcus sp. (strain BH72).